The primary structure comprises 387 residues: Succinate--CoA ligase [ADP-forming] subunit beta (387 aa).

The ATP-grasp domain occupies lysine 9–lysine 236. ATP contacts are provided by residues lysine 45, glycine 52–glycine 54, serine 94, and glutamate 99. 2 residues coordinate Mg(2+): asparagine 191 and aspartate 205. Substrate-binding positions include asparagine 256 and glycine 318–threonine 320.

The protein belongs to the succinate/malate CoA ligase beta subunit family. In terms of assembly, heterotetramer of two alpha and two beta subunits. The cofactor is Mg(2+).

The enzyme catalyses succinate + ATP + CoA = succinyl-CoA + ADP + phosphate. It carries out the reaction GTP + succinate + CoA = succinyl-CoA + GDP + phosphate. The protein operates within carbohydrate metabolism; tricarboxylic acid cycle; succinate from succinyl-CoA (ligase route): step 1/1. Its function is as follows. Succinyl-CoA synthetase functions in the citric acid cycle (TCA), coupling the hydrolysis of succinyl-CoA to the synthesis of either ATP or GTP and thus represents the only step of substrate-level phosphorylation in the TCA. The beta subunit provides nucleotide specificity of the enzyme and binds the substrate succinate, while the binding sites for coenzyme A and phosphate are found in the alpha subunit. This Mycolicibacterium vanbaalenii (strain DSM 7251 / JCM 13017 / BCRC 16820 / KCTC 9966 / NRRL B-24157 / PYR-1) (Mycobacterium vanbaalenii) protein is Succinate--CoA ligase [ADP-forming] subunit beta.